Here is a 584-residue protein sequence, read N- to C-terminus: Levansucrase (584 aa).

The N-terminal stretch at 1 to 30 (MAHVRRKVATLNMALAGSLLMVLGAQSALA) is a signal peptide. Gln31 is modified (pyrrolidone carboxylic acid). Trp134, Asp135, Ser225, Arg308, and Asp309 together coordinate sucrose. The active-site Nucleophile is Asp135. A disulfide bridge connects residues Cys339 and Cys395. Glu401 (proton donor/acceptor) is an active-site residue.

This sequence belongs to the glycosyl hydrolase 68 family. In terms of assembly, monomer. In terms of processing, the N-terminus is blocked. The N-terminal Gln is cyclized to a pyroglutamic acid.

The protein localises to the secreted. It carries out the reaction [6)-beta-D-fructofuranosyl-(2-&gt;](n) alpha-D-glucopyranoside + sucrose = [6)-beta-D-fructofuranosyl-(2-&gt;](n+1) alpha-D-glucopyranoside + D-glucose. Its activity is regulated as follows. Strongly inhibited by Hg(2+) and slightly activated by Co(2+). Not inhibited by the metal ion chelator EDTA, suggesting that this enzyme does not need a metal cofactor. In terms of biological role, catalyzes the synthesis of levan, a fructose polymer, by transferring the fructosyl moiety from sucrose to a growing acceptor molecule. Also displays sucrose hydrolase activity. In vitro, catalyzes transfructosylation from sucrose to a variety of acceptors including water (sucrose hydrolysis), glucose (exchange reaction), fructan (polymerase reaction) and sucrose (oligofructoside synthesis). Levansucrase of G.diazotrophicus SRT4, unlike the enzyme of B.subtilis, causes accumulation of large quantities of tri- and tetrasaccharides but small quantities of high-molecular-mass levan. It may act more as a sucrose hydrolase than as a fructan polymerase, and may be the key enzyme in the sucrose metabolism of G.diazotrophicus SRT4. In Gluconacetobacter diazotrophicus (Acetobacter diazotrophicus), this protein is Levansucrase.